The sequence spans 106 residues: Large ribosomal subunit protein uL24 (106 aa).

Belongs to the universal ribosomal protein uL24 family. As to quaternary structure, part of the 50S ribosomal subunit.

One of two assembly initiator proteins, it binds directly to the 5'-end of the 23S rRNA, where it nucleates assembly of the 50S subunit. Functionally, one of the proteins that surrounds the polypeptide exit tunnel on the outside of the subunit. This is Large ribosomal subunit protein uL24 from Gluconobacter oxydans (strain 621H) (Gluconobacter suboxydans).